Reading from the N-terminus, the 481-residue chain is Arf-GAP domain and FG repeat-containing protein 2 (481 aa).

The region spanning 27 to 153 (EVWCRRVREL…WYVPPDQVKG (127 aa)) is the Arf-GAP domain. The segment at 47–70 (CFECAQRGVTYVDITVGSFVCTTC) adopts a C4-type zinc-finger fold. Disordered stretches follow at residues 150–220 (QVKG…SVKK), 271–309 (SSVF…APAS), and 431–481 (QQNG…NPFL). The span at 157–166 (TKGSASTPVQ) shows a compositional bias: polar residues. Lys173 bears the N6-acetyllysine mark. Composition is skewed to polar residues over residues 188 to 210 (VAAS…ARST), 283 to 298 (ASFQ…SQGT), and 454 to 481 (AGIS…NPFL).

In terms of assembly, interacts with EPS15R.

This chain is Arf-GAP domain and FG repeat-containing protein 2 (AGFG2), found in Homo sapiens (Human).